Here is a 134-residue protein sequence, read N- to C-terminus: MPPKTRASAARKPRRKANKNITVGQAHIKSTFNNTIVSITDTTGAVISWASSGEVGFKGSRKSTPYAAQMAAEQAAKRAQEHGMKKVDVFVKGPGSGRETAIRSLQAAGLEVGSIQDVTPMAHNGARPAKRRRV.

This sequence belongs to the universal ribosomal protein uS11 family. In terms of assembly, part of the 30S ribosomal subunit. Interacts with proteins S7 and S18. Binds to IF-3.

Located on the platform of the 30S subunit, it bridges several disparate RNA helices of the 16S rRNA. Forms part of the Shine-Dalgarno cleft in the 70S ribosome. The sequence is that of Small ribosomal subunit protein uS11 from Micrococcus luteus (strain ATCC 4698 / DSM 20030 / JCM 1464 / CCM 169 / CCUG 5858 / IAM 1056 / NBRC 3333 / NCIMB 9278 / NCTC 2665 / VKM Ac-2230) (Micrococcus lysodeikticus).